Consider the following 1756-residue polypeptide: RANBP2-like and GRIP domain-containing protein 2 (1756 aa).

Position 21 is a phosphoserine (Ser21). TPR repeat units follow at residues 59–92 (PRAHRFLGLLYELEENTEKAVECYRRSLELNPPQ), 583–616 (QKMGRGLNSSYDQQEYIGRSVHYWKKVLPLLKII), and 647–680 (EDAHITFAILDAVHGNIEDAVTAFESIKSVVSYW). The segment at 759-804 (GPLYKNGSLRNADSEIKHSTPSPTKYSLSPSKSYKYSPKTPPRWAE) is disordered. Residues 777-796 (STPSPTKYSLSPSKSYKYSP) are compositionally biased toward low complexity. In terms of domain architecture, RanBD1 1 spans 1029 to 1165 (HFEPVVQMPE…FEECQRLLLD (137 aa)). 2 disordered regions span residues 1206 to 1241 (TKVTEEENKGSGTGAAGASDTTIKPNPENTGPTLEW) and 1299 to 1324 (AKLNQSGTSVGTDEESDVTQEEERDG). The span at 1228–1237 (IKPNPENTGP) shows a compositional bias: polar residues. The segment covering 1310 to 1322 (TDEESDVTQEEER) has biased composition (acidic residues). The RanBD1 2 domain maps to 1326-1462 (YFEPVVPLPD…FDEAKTAQEK (137 aa)). Polar residues predominate over residues 1573-1586 (NDSETSSVAQSGSE). The interval 1573–1614 (NDSETSSVAQSGSESKVEPKKCELSKNSDIEQSSDSKVKNLS) is disordered. Residues 1587–1610 (SKVEPKKCELSKNSDIEQSSDSKV) show a composition bias toward basic and acidic residues. The region spanning 1693 to 1743 (QEESAANVEHLKNVLLQFIFLKPGSERESLLPVINTMLQLSPEEKGKLAAV) is the GRIP domain.

The chain is RANBP2-like and GRIP domain-containing protein 2 (RGPD2) from Homo sapiens (Human).